Reading from the N-terminus, the 130-residue chain is Ribosome-binding factor A (130 aa).

Belongs to the RbfA family. As to quaternary structure, monomer. Binds 30S ribosomal subunits, but not 50S ribosomal subunits or 70S ribosomes.

It is found in the cytoplasm. Its function is as follows. One of several proteins that assist in the late maturation steps of the functional core of the 30S ribosomal subunit. Associates with free 30S ribosomal subunits (but not with 30S subunits that are part of 70S ribosomes or polysomes). Required for efficient processing of 16S rRNA. May interact with the 5'-terminal helix region of 16S rRNA. This Prochlorococcus marinus (strain MIT 9215) protein is Ribosome-binding factor A.